The primary structure comprises 157 residues: Large ribosomal subunit protein uL22 (157 aa).

Belongs to the universal ribosomal protein uL22 family. In terms of assembly, part of the 50S ribosomal subunit.

This protein binds specifically to 23S rRNA. It makes multiple contacts with different domains of the 23S rRNA in the assembled 50S subunit and ribosome. Its function is as follows. The globular domain of the protein is located near the polypeptide exit tunnel on the outside of the subunit, while an extended beta-hairpin is found that lines the wall of the exit tunnel in the center of the 70S ribosome. This Methanocorpusculum labreanum (strain ATCC 43576 / DSM 4855 / Z) protein is Large ribosomal subunit protein uL22.